Consider the following 109-residue polypeptide: ATP-dependent Clp protease adapter protein ClpS (109 aa).

Residues 1-23 (MTERKHDDTGVEEGTGLATKTRP) form a disordered region.

Belongs to the ClpS family. In terms of assembly, binds to the N-terminal domain of the chaperone ClpA.

Its function is as follows. Involved in the modulation of the specificity of the ClpAP-mediated ATP-dependent protein degradation. The protein is ATP-dependent Clp protease adapter protein ClpS of Maricaulis maris (strain MCS10) (Caulobacter maris).